Consider the following 265-residue polypeptide: Transcription factor BHLH062 (265 aa).

The disordered stretch occupies residues 1 to 26 (MVPRDRVNAAAAGGGGEGRLVQSGIV). The interval 35-48 (PKRIHKSEREKLKR) is basic motif; degenerate. The region spanning 35-85 (PKRIHKSEREKLKRDKQNDLFNELGNLLEPDRQNNGKACVLGETTRILKDL) is the bHLH domain. The interval 49–85 (DKQNDLFNELGNLLEPDRQNNGKACVLGETTRILKDL) is helix-loop-helix motif. Residues 75–130 (LGETTRILKDLLSQVESLRKENSSLKNESHYVALERNELHDDNSMLRTEILELQNE) adopt a coiled-coil conformation. A disordered region spans residues 200–265 (ESATSEDSEP…TNEEDRIGRS (66 aa)). Residues 210 to 220 (SQEHGISDHVT) are compositionally biased toward basic and acidic residues. A compositionally biased stretch (polar residues) spans 245-256 (QDQQCSSGTSGT).

This sequence belongs to the bHLH protein family. In terms of assembly, interacts with TIFY11A/JAZ9.

It localises to the nucleus. Functionally, transcription factor that plays a positive role in salt stress tolerance. Interacts with TIFY11A/JAZ9 and binds to the promoter of some potassium ion transporter genes to regulate potassium homeostasis during salt stress. The protein is Transcription factor BHLH062 of Oryza sativa subsp. japonica (Rice).